A 360-amino-acid polypeptide reads, in one-letter code: Glutamate 5-kinase (360 aa).

Lys7 contributes to the ATP binding site. 3 residues coordinate substrate: Ser47, Asp134, and Asn146. Residues 166-167 (TD) and 210-216 (TGGISTK) contribute to the ATP site. The region spanning 275-356 (VGKITLDDGA…SSIIVVHRDV (82 aa)) is the PUA domain.

The protein belongs to the glutamate 5-kinase family.

It localises to the cytoplasm. The enzyme catalyses L-glutamate + ATP = L-glutamyl 5-phosphate + ADP. The protein operates within amino-acid biosynthesis; L-proline biosynthesis; L-glutamate 5-semialdehyde from L-glutamate: step 1/2. In terms of biological role, catalyzes the transfer of a phosphate group to glutamate to form L-glutamate 5-phosphate. This is Glutamate 5-kinase from Prochlorococcus marinus (strain MIT 9301).